A 696-amino-acid chain; its full sequence is Glycine--tRNA ligase beta subunit (696 aa).

The protein belongs to the class-II aminoacyl-tRNA synthetase family. In terms of assembly, tetramer of two alpha and two beta subunits.

The protein localises to the cytoplasm. The enzyme catalyses tRNA(Gly) + glycine + ATP = glycyl-tRNA(Gly) + AMP + diphosphate. This chain is Glycine--tRNA ligase beta subunit, found in Aromatoleum aromaticum (strain DSM 19018 / LMG 30748 / EbN1) (Azoarcus sp. (strain EbN1)).